Here is a 460-residue protein sequence, read N- to C-terminus: uncharacterized protein (460 aa).

To yeast YGL164c.

This is an uncharacterized protein from Schizosaccharomyces pombe (strain 972 / ATCC 24843) (Fission yeast).